Consider the following 120-residue polypeptide: Large ribosomal subunit protein uL18 (120 aa).

This sequence belongs to the universal ribosomal protein uL18 family. Part of the 50S ribosomal subunit; part of the 5S rRNA/L5/L18/L25 subcomplex. Contacts the 5S and 23S rRNAs.

This is one of the proteins that bind and probably mediate the attachment of the 5S RNA into the large ribosomal subunit, where it forms part of the central protuberance. The protein is Large ribosomal subunit protein uL18 of Rhizobium johnstonii (strain DSM 114642 / LMG 32736 / 3841) (Rhizobium leguminosarum bv. viciae).